Here is a 184-residue protein sequence, read N- to C-terminus: Peptide deformylase (184 aa).

Fe cation-binding residues include Cys-96 and His-138. Glu-139 is an active-site residue. Fe cation is bound at residue His-142.

The protein belongs to the polypeptide deformylase family. Fe(2+) serves as cofactor.

The enzyme catalyses N-terminal N-formyl-L-methionyl-[peptide] + H2O = N-terminal L-methionyl-[peptide] + formate. Its function is as follows. Removes the formyl group from the N-terminal Met of newly synthesized proteins. Requires at least a dipeptide for an efficient rate of reaction. N-terminal L-methionine is a prerequisite for activity but the enzyme has broad specificity at other positions. This is Peptide deformylase from Cytophaga hutchinsonii (strain ATCC 33406 / DSM 1761 / CIP 103989 / NBRC 15051 / NCIMB 9469 / D465).